Here is a 118-residue protein sequence, read N- to C-terminus: Ribosome-binding factor A (118 aa).

This sequence belongs to the RbfA family. In terms of assembly, monomer. Binds 30S ribosomal subunits, but not 50S ribosomal subunits or 70S ribosomes.

It localises to the cytoplasm. In terms of biological role, one of several proteins that assist in the late maturation steps of the functional core of the 30S ribosomal subunit. Associates with free 30S ribosomal subunits (but not with 30S subunits that are part of 70S ribosomes or polysomes). Required for efficient processing of 16S rRNA. May interact with the 5'-terminal helix region of 16S rRNA. This is Ribosome-binding factor A from Dehalococcoides mccartyi (strain ATCC BAA-2266 / KCTC 15142 / 195) (Dehalococcoides ethenogenes (strain 195)).